The following is a 148-amino-acid chain: PSPSRRSRSRSRSRSKSPKRSPAKKARKTPKKRRATGGAKKPSTLSMIVAAIQAMKNRKGSSVQAIRKYILANNKGINTSRLGSAMKLAFAKGLKSGVLVRPKTSAGASGATGSFRVGKAPSSPKKKAKKAKSPKKKSSKKSSNKSNN.

Over residues 1–35 (PSPSRRSRSRSRSRSKSPKRSPAKKARKTPKKRRA) the composition is skewed to basic residues. 2 disordered regions span residues 1 to 44 (PSPS…KPST) and 97 to 148 (GVLV…KSNN). Positions 40 to 119 (KKPSTLSMIV…GATGSFRVGK (80 aa)) constitute an H15 domain. Residues 124–148 (PKKKAKKAKSPKKKSSKKSSNKSNN) show a composition bias toward basic residues.

It belongs to the histone H1/H5 family. In terms of tissue distribution, sperm.

It localises to the nucleus. The protein localises to the chromosome. In terms of biological role, linker histones are implicated in chromatin remodeling and/or transcriptional regulation during spermiogenesis, the process of spermatid maturation into spermatozoa. This chain is Sperm-specific protein PHI-2B, found in Mytilus californianus (California mussel).